The chain runs to 378 residues: Chloroplast stem-loop binding protein of 41 kDa b, chloroplastic (378 aa).

The transit peptide at Met1–Ala50 directs the protein to the chloroplast. Ser240 is subject to Phosphoserine.

The protein belongs to the NAD(P)-dependent epimerase/dehydratase family. As to quaternary structure, component of a complex made of CSP41A, CSP41B, ribosomes, and the plastid-encoded RNA polymerase. Interacts with CSP41A. Binds DNA when in complex with PRIN2. In terms of tissue distribution, highly expressed in seedlings, particularly in photosynthetically active organs. Mostly expressed in young and mature leaves, and, to a lower extent, in flowers. Low expression in etiolated seedlings compared to green seedlings.

It is found in the plastid. Its subcellular location is the chloroplast. The protein localises to the plastoglobule. The protein resides in the cytoplasm. In terms of biological role, binds and cleaves RNA, particularly in stem-loops. Associates with pre-ribosomal particles in chloroplasts, and participates in chloroplast ribosomal RNA metabolism, probably during the final steps of 23S rRNA maturation. May enhance transcription by the plastid-encoded polymerase and translation in plastid via the stabilization of ribosome assembly intermediates. Required for chloroplast integrity. Involved in the regulation of the circadian system. Involved in the regulation of heteroglycans and monosaccharide mobilization. Required for full expression of genes transcribed by the plastid-encoded RNA polymerase (PEP). Essential for embryo development. This chain is Chloroplast stem-loop binding protein of 41 kDa b, chloroplastic (CSP41B), found in Arabidopsis thaliana (Mouse-ear cress).